The following is a 1054-amino-acid chain: MLQKREKVLLLRTFQGRTLRIVREHYLRPCVPCHSPLCPQPAACSHDGKLLSSDVTHYVIPDWKVVQDYLEILEFPELKGIIFMQTACQAVQHQRGRRQYNKLRNLLKDARHDCILFANEFQQCCYLPRERGESMEKWQTRSIYNAAVWYYHHCQDRMPIVMVTEDEEAIQQYGSETEGVFVITFKNYLDNFWPDLKAAHELCDSILQSRRERENESQESHGKEYPEHLPLEVLEAGIKSGRYIQGILNVNKHRAQIEAFVRLQGASSKDSDLVSDILIHGMKARNRSIHGDVVVVELLPKNEWKGRTVALCENDCDDKASGESPSEPMPTGRVVGILQKNWRDYVVTFPSKEEVQSQGKNAQKILVTPWDYRIPKIRISTQQAETLQDFRVVVRIDSWESTSVYPNGHFVRVLGRIGDLEGEIATILVENSISVIPFSEAQMCEMPVNTPESPWKVSPEEEQKRKDLRKSHLVFSIDPKGCEDVDDTLSVRTLNNGNLELGVHIADVTHFVAPNSYIDIEARTRATTYYLADRRYDMLPSVLSADLCSLLGGVDRYAVSIMWELDKASYEIKKVWYGRTIIRSAYKLFYEAAQELLDGNLSVVDDIPEFKDLDEKSRQAKLEELVWAIGKLTDIARHVRAKRDGCGALELEGVEVCVQLDDKKNIHDLIPKQPLEVHETVAECMILANHWVAKKIWESFPHQALLRQHPPPHQEFFSELRECAKAKGFFIDTRSNKTLADSLDNANDPHDPIVNRLLRSMATQAMSNALYFSTGSCAEEEFHHYGLALDKYTHFTSPIRRYSDIVVHRLLMAAISKDKKMEIKGNLFSNKDLEELCRHINNRNQAAQHSQKQSTELFQCMYFKDKDPATEERCISDGVIYSIRTNGVLLFIPRFGIKGAAYLKNKDGLVISCGPDSCSEWKPGSLQRFQNKITSTTTDGESVTFHLFDHVTVRISIQASRCHSDTIRLEIISNKPYKIPNTELIHQSSPLLKSELVKEVTKSVEEAQLAQEVKVNIIQEEYQEYRQTKGRSLYTLLEEIRDLALLDVSNNYGI.

The CSD1 domain maps to 236 to 309 (AGIKSGRYIQ…PKNEWKGRTV (74 aa)). A CSD2 domain is found at 365-431 (ILVTPWDYRI…GEIATILVEN (67 aa)). Residues 465–816 (RKDLRKSHLV…VHRLLMAAIS (352 aa)) enclose the RNB domain. Residue serine 989 is modified to Phosphoserine.

It belongs to the RNR ribonuclease family. As to quaternary structure, component of the RNA exosome complex. The catalytically inactive RNA exosome core (Exo-9) complex is believed to associate with catalytic subunits EXOSC10, and DIS3 or DIS3L in cytoplasmic- and nuclear-specific RNA exosome complex forms. Requires Mg(2+) as cofactor.

It localises to the cytoplasm. The enzyme catalyses Exonucleolytic cleavage in the 3'- to 5'-direction to yield nucleoside 5'-phosphates.. Catalytic component of the RNA exosome complex which has 3'-&gt;5' exoribonuclease activity and participates in a multitude of cellular RNA processing and degradation events. In the cytoplasm, the RNA exosome complex is involved in general mRNA turnover and specifically degrades inherently unstable mRNAs containing AU-rich elements (AREs) within their 3' untranslated regions, and in RNA surveillance pathways, preventing translation of aberrant mRNAs. It seems to be involved in degradation of histone mRNA. The sequence is that of DIS3-like exonuclease 1 (DIS3L) from Homo sapiens (Human).